A 444-amino-acid polypeptide reads, in one-letter code: Glutamyl-tRNA reductase (444 aa).

Substrate is bound by residues 49-52, Ser109, 114-116, and Gln120; these read TCNR and ETQ. Cys50 (nucleophile) is an active-site residue. 189–194 provides a ligand contact to NADP(+); the sequence is GAGKMG.

The protein belongs to the glutamyl-tRNA reductase family. As to quaternary structure, homodimer.

The enzyme catalyses (S)-4-amino-5-oxopentanoate + tRNA(Glu) + NADP(+) = L-glutamyl-tRNA(Glu) + NADPH + H(+). It participates in porphyrin-containing compound metabolism; protoporphyrin-IX biosynthesis; 5-aminolevulinate from L-glutamyl-tRNA(Glu): step 1/2. Catalyzes the NADPH-dependent reduction of glutamyl-tRNA(Glu) to glutamate 1-semialdehyde (GSA). The polypeptide is Glutamyl-tRNA reductase (Bacillus cereus (strain ZK / E33L)).